Reading from the N-terminus, the 629-residue chain is tRNA uridine 5-carboxymethylaminomethyl modification enzyme MnmG (629 aa).

13–18 (GGGHAG) is a binding site for FAD. 273-287 (GPRYCPSIEDKINRF) is an NAD(+) binding site.

The protein belongs to the MnmG family. In terms of assembly, homodimer. Heterotetramer of two MnmE and two MnmG subunits. The cofactor is FAD.

It localises to the cytoplasm. Functionally, NAD-binding protein involved in the addition of a carboxymethylaminomethyl (cmnm) group at the wobble position (U34) of certain tRNAs, forming tRNA-cmnm(5)s(2)U34. The protein is tRNA uridine 5-carboxymethylaminomethyl modification enzyme MnmG of Shewanella piezotolerans (strain WP3 / JCM 13877).